The following is a 703-amino-acid chain: Elongation factor G (703 aa).

The 277-residue stretch at 10–286 folds into the tr-type G domain; the sequence is NKVRNIGIMA…AVVKFLPSPL (277 aa). GTP-binding positions include 19–26, 83–87, and 137–140; these read AHIDAGKT, DTPGH, and NKLD.

The protein belongs to the TRAFAC class translation factor GTPase superfamily. Classic translation factor GTPase family. EF-G/EF-2 subfamily.

The protein localises to the cytoplasm. Functionally, catalyzes the GTP-dependent ribosomal translocation step during translation elongation. During this step, the ribosome changes from the pre-translocational (PRE) to the post-translocational (POST) state as the newly formed A-site-bound peptidyl-tRNA and P-site-bound deacylated tRNA move to the P and E sites, respectively. Catalyzes the coordinated movement of the two tRNA molecules, the mRNA and conformational changes in the ribosome. The sequence is that of Elongation factor G from Nocardioides sp. (strain ATCC BAA-499 / JS614).